The chain runs to 530 residues: Bifunctional purine biosynthesis protein PurH (530 aa).

The 148-residue stretch at 1 to 148 folds into the MGS-like domain; that stretch reads MEQARPIRRA…KNHKDVAIVV (148 aa).

This sequence belongs to the PurH family.

The enzyme catalyses (6R)-10-formyltetrahydrofolate + 5-amino-1-(5-phospho-beta-D-ribosyl)imidazole-4-carboxamide = 5-formamido-1-(5-phospho-D-ribosyl)imidazole-4-carboxamide + (6S)-5,6,7,8-tetrahydrofolate. It catalyses the reaction IMP + H2O = 5-formamido-1-(5-phospho-D-ribosyl)imidazole-4-carboxamide. The protein operates within purine metabolism; IMP biosynthesis via de novo pathway; 5-formamido-1-(5-phospho-D-ribosyl)imidazole-4-carboxamide from 5-amino-1-(5-phospho-D-ribosyl)imidazole-4-carboxamide (10-formyl THF route): step 1/1. Its pathway is purine metabolism; IMP biosynthesis via de novo pathway; IMP from 5-formamido-1-(5-phospho-D-ribosyl)imidazole-4-carboxamide: step 1/1. The protein is Bifunctional purine biosynthesis protein PurH of Aeromonas salmonicida (strain A449).